A 236-amino-acid polypeptide reads, in one-letter code: 1-(5-phosphoribosyl)-5-[(5-phosphoribosylamino)methylideneamino] imidazole-4-carboxamide isomerase (236 aa).

The active-site Proton acceptor is aspartate 8. The Proton donor role is filled by aspartate 128.

The protein belongs to the HisA/HisF family.

Its subcellular location is the cytoplasm. It catalyses the reaction 1-(5-phospho-beta-D-ribosyl)-5-[(5-phospho-beta-D-ribosylamino)methylideneamino]imidazole-4-carboxamide = 5-[(5-phospho-1-deoxy-D-ribulos-1-ylimino)methylamino]-1-(5-phospho-beta-D-ribosyl)imidazole-4-carboxamide. It participates in amino-acid biosynthesis; L-histidine biosynthesis; L-histidine from 5-phospho-alpha-D-ribose 1-diphosphate: step 4/9. This is 1-(5-phosphoribosyl)-5-[(5-phosphoribosylamino)methylideneamino] imidazole-4-carboxamide isomerase from Nitrosopumilus maritimus (strain SCM1).